Here is a 392-residue protein sequence, read N- to C-terminus: L-rhamnonate dehydratase (392 aa).

His22 and Arg48 together coordinate substrate. Mg(2+)-binding residues include Asp214, Glu240, and Glu268. Catalysis depends on His318, which acts as the Proton acceptor. Substrate is bound at residue Glu338.

It belongs to the mandelate racemase/muconate lactonizing enzyme family. RhamD subfamily. In terms of assembly, homooctamer; tetramer of dimers. Mg(2+) is required as a cofactor.

The enzyme catalyses L-rhamnonate = 2-dehydro-3-deoxy-L-rhamnonate + H2O. In terms of biological role, catalyzes the dehydration of L-rhamnonate to 2-keto-3-deoxy-L-rhamnonate (KDR). The protein is L-rhamnonate dehydratase of Burkholderia ambifaria (strain MC40-6).